We begin with the raw amino-acid sequence, 517 residues long: 2-isopropylmalate synthase (517 aa).

The 263-residue stretch at 7 to 269 folds into the Pyruvate carboxyltransferase domain; the sequence is VIIFDTTLRD…ETGIDTTQIV (263 aa). Mn(2+)-binding residues include aspartate 16, histidine 204, histidine 206, and asparagine 240. Residues 395–517 are regulatory domain; that stretch reads KFISQKISTE…KPKAQGSGTI (123 aa).

Belongs to the alpha-IPM synthase/homocitrate synthase family. LeuA type 1 subfamily. As to quaternary structure, homodimer. Mn(2+) serves as cofactor.

It is found in the cytoplasm. It catalyses the reaction 3-methyl-2-oxobutanoate + acetyl-CoA + H2O = (2S)-2-isopropylmalate + CoA + H(+). The protein operates within amino-acid biosynthesis; L-leucine biosynthesis; L-leucine from 3-methyl-2-oxobutanoate: step 1/4. Functionally, catalyzes the condensation of the acetyl group of acetyl-CoA with 3-methyl-2-oxobutanoate (2-ketoisovalerate) to form 3-carboxy-3-hydroxy-4-methylpentanoate (2-isopropylmalate). This chain is 2-isopropylmalate synthase, found in Neisseria meningitidis serogroup A / serotype 4A (strain DSM 15465 / Z2491).